A 362-amino-acid polypeptide reads, in one-letter code: Histidinol-phosphate aminotransferase (362 aa).

K218 is modified (N6-(pyridoxal phosphate)lysine).

It belongs to the class-II pyridoxal-phosphate-dependent aminotransferase family. Histidinol-phosphate aminotransferase subfamily. As to quaternary structure, homodimer. Pyridoxal 5'-phosphate is required as a cofactor.

It catalyses the reaction L-histidinol phosphate + 2-oxoglutarate = 3-(imidazol-4-yl)-2-oxopropyl phosphate + L-glutamate. It participates in amino-acid biosynthesis; L-histidine biosynthesis; L-histidine from 5-phospho-alpha-D-ribose 1-diphosphate: step 7/9. The chain is Histidinol-phosphate aminotransferase from Ruegeria sp. (strain TM1040) (Silicibacter sp.).